Consider the following 145-residue polypeptide: Small ribosomal subunit protein uS9 (145 aa).

It belongs to the universal ribosomal protein uS9 family.

It localises to the cytoplasm. The polypeptide is Small ribosomal subunit protein uS9 (RPS16) (Gossypium hirsutum (Upland cotton)).